The sequence spans 432 residues: Trigger factor (432 aa).

In terms of domain architecture, PPIase FKBP-type spans 161–246; the sequence is DDRVTIDFVG…LKKIENMVLP (86 aa).

The protein belongs to the FKBP-type PPIase family. Tig subfamily.

It is found in the cytoplasm. It carries out the reaction [protein]-peptidylproline (omega=180) = [protein]-peptidylproline (omega=0). Functionally, involved in protein export. Acts as a chaperone by maintaining the newly synthesized protein in an open conformation. Functions as a peptidyl-prolyl cis-trans isomerase. The sequence is that of Trigger factor from Haemophilus influenzae (strain 86-028NP).